A 189-amino-acid chain; its full sequence is MPTRSRSKANQRRRRPRRVVVVAPSMAQPRTQSRRPRRRNKRGGGLNGSHTVDFSMVHGPFNGNATGTVKFGPSSDCQCIKGNLAAYQKYRIVWLKVVYQSEAAATDRGCIAYHVDTSTTKKAADVVLLDTWNIRSNGSATFGREILGDQPWYESNKDQFFFLYRGTGGTDVAGHYRISGRIQLMNASL.

Composition is skewed to basic residues over residues 1 to 18 (MPTR…RPRR) and 32 to 42 (QSRRPRRRNKR). Residues 1 to 50 (MPTRSRSKANQRRRRPRRVVVVAPSMAQPRTQSRRPRRRNKRGGGLNGSH) are disordered.

It belongs to the luteoviruses capsid protein family.

It localises to the virion. In terms of biological role, major capsid protein. The sequence is that of Major capsid protein from Pea enation mosaic virus-1 (strain WSG) (PEMV-1).